The sequence spans 521 residues: MANYLPSSPAWLAFSQAAKSASRGGERLRIIEAAGLRVDLTAQPQSDSLDNAAQDLLAQQNFDAARAQLYDGGEANWTERRPAWHTALRADNPPPAVAQDILAERERVRRFVRELDQSLAYDCVLHLGIGGSDWGPRMVTRALRHGGLRRNIQFASNVDSHAVADAIGQLDPRRTLVIVASKSFTTTEPLANAEVAMNWLRDAGVADPIKHVVAVTANVDAALDFGISPDRVFRFWDWVGGRYSLWSAIGLPIALALGNEALDQLLAGAAAMDQHFLQAPLRKNAPLQMALAGLANRSVLGYATLAITPYDSRLMHLVPWAQQLEMESLGKVASRDGTPVGVPTGPVVWGMPGTDCQHTFFQWLHQDTTGAPVDFIVCERPDHAYARHHNMLIANCLAQRSALLRGKSYEDILQEIREHEPDLQRAEVLARHRVHPGGRPSNLIVLPRLDAYSLGALLALYEHKVFAQGVLWGINPFDQWGVEFGKLLAKRIIRELDAPSADTSGDQDPSTRYWIDSLSRR.

Glu-327 acts as the Proton donor in catalysis. Catalysis depends on residues His-358 and Lys-486.

This sequence belongs to the GPI family.

The protein resides in the cytoplasm. The enzyme catalyses alpha-D-glucose 6-phosphate = beta-D-fructose 6-phosphate. The protein operates within carbohydrate biosynthesis; gluconeogenesis. It participates in carbohydrate degradation; glycolysis; D-glyceraldehyde 3-phosphate and glycerone phosphate from D-glucose: step 2/4. Its function is as follows. Catalyzes the reversible isomerization of glucose-6-phosphate to fructose-6-phosphate. In Bordetella petrii (strain ATCC BAA-461 / DSM 12804 / CCUG 43448), this protein is Glucose-6-phosphate isomerase.